Here is a 657-residue protein sequence, read N- to C-terminus: Forkhead box protein O3 (657 aa).

2 disordered regions span residues 1 to 71 and 216 to 320; these read MAEA…EGAA and SSWW…ELDD. The fork-head DNA-binding region spans 142 to 236; it reads WGNMSYADLI…KGGKAPRRRA (95 aa). Basic residues predominate over residues 246–257; the sequence is TKSRGRAAKKKA. Over residues 268–283 the composition is skewed to polar residues; sequence DSPSQLSKWPGSPTSR. Residues 284–296 are compositionally biased toward basic and acidic residues; it reads SSDKLDTWTDFRS. A compositionally biased stretch (polar residues) spans 297–307; it reads RTNSNASTISG.

Dephosphorylation may promote translocation to the nucleus where the protein induces transcription of target genes and triggers apoptosis. Localized to the animal hemisphere during early cleavage stages. At the late neurula, localized in the anterior neural plate, neural crest cells and in the hatching gland. As development progresses, expression becomes less localized, being observed in a variety of organs and tissues including the head, branchial arches and somites by stage 32.

The protein localises to the cytoplasm. The protein resides in the cytosol. It is found in the nucleus. Its function is as follows. Transcriptional activator that recognizes and binds to the DNA sequence 5'-[AG]TAAA[TC]A-3' and regulates different processes, such as apoptosis and autophagy. Acts as a positive regulator of autophagy in skeletal muscle: in starved cells, enters the nucleus following dephosphorylation and binds the promoters of autophagy genes, thereby activating their expression, resulting in proteolysis of skeletal muscle proteins. Triggers apoptosis in the absence of survival factors, including neuronal cell death upon oxidative stress. In response to metabolic stress, translocates into the mitochondria where it promotes mtDNA transcription. Also acts as a key regulator of chondrogenic commitment of skeletal progenitor cells in response to lipid availability: when lipids levels are low, translocates to the nucleus and promotes expression of sox9, which induces chondrogenic commitment and suppresses fatty acid oxidation. Also acts as a key regulator of regulatory T-cells (Treg) differentiation. In Xenopus laevis (African clawed frog), this protein is Forkhead box protein O3.